Here is a 937-residue protein sequence, read N- to C-terminus: Protein translocase subunit SecA (937 aa).

ATP contacts are provided by residues glutamine 86, 104-108, and aspartate 493; that span reads GEGKT. Residues 868-889 form a disordered region; sequence LERPSQPTKLAYSAPSEDGDAE. Residues cysteine 911, cysteine 913, cysteine 922, and histidine 923 each contribute to the Zn(2+) site. The tract at residues 915 to 937 is disordered; that stretch reads SGKKFKQCHGRPGGPTGLTARVS.

This sequence belongs to the SecA family. Monomer and homodimer. Part of the essential Sec protein translocation apparatus which comprises SecA, SecYEG and auxiliary proteins SecDF. Other proteins may also be involved. Zn(2+) serves as cofactor.

Its subcellular location is the cell membrane. The protein localises to the cytoplasm. The enzyme catalyses ATP + H2O + cellular proteinSide 1 = ADP + phosphate + cellular proteinSide 2.. Functionally, part of the Sec protein translocase complex. Interacts with the SecYEG preprotein conducting channel. Has a central role in coupling the hydrolysis of ATP to the transfer of proteins into and across the cell membrane, serving as an ATP-driven molecular motor driving the stepwise translocation of polypeptide chains across the membrane. The polypeptide is Protein translocase subunit SecA (Nocardioides sp. (strain ATCC BAA-499 / JS614)).